The primary structure comprises 196 residues: Flagellar transcriptional regulator FlhC (196 aa).

Residues Cys138, Cys141, Cys158, and Cys161 each coordinate Zn(2+).

The protein belongs to the FlhC family. Heterohexamer composed of two FlhC and four FlhD subunits. Each FlhC binds a FlhD dimer, forming a heterotrimer, and a hexamer assembles by dimerization of two heterotrimers. It depends on Zn(2+) as a cofactor.

Its subcellular location is the cytoplasm. Functionally, functions in complex with FlhD as a master transcriptional regulator that regulates transcription of several flagellar and non-flagellar operons by binding to their promoter region. Activates expression of class 2 flagellar genes, including fliA, which is a flagellum-specific sigma factor that turns on the class 3 genes. Also regulates genes whose products function in a variety of physiological pathways. The sequence is that of Flagellar transcriptional regulator FlhC from Sodalis glossinidius (strain morsitans).